A 285-amino-acid polypeptide reads, in one-letter code: ATP phosphoribosyltransferase (285 aa).

It belongs to the ATP phosphoribosyltransferase family. Long subfamily. Requires Mg(2+) as cofactor.

The protein resides in the cytoplasm. It carries out the reaction 1-(5-phospho-beta-D-ribosyl)-ATP + diphosphate = 5-phospho-alpha-D-ribose 1-diphosphate + ATP. It functions in the pathway amino-acid biosynthesis; L-histidine biosynthesis; L-histidine from 5-phospho-alpha-D-ribose 1-diphosphate: step 1/9. Feedback inhibited by histidine. Functionally, catalyzes the condensation of ATP and 5-phosphoribose 1-diphosphate to form N'-(5'-phosphoribosyl)-ATP (PR-ATP). Has a crucial role in the pathway because the rate of histidine biosynthesis seems to be controlled primarily by regulation of HisG enzymatic activity. The chain is ATP phosphoribosyltransferase from Streptomyces avermitilis (strain ATCC 31267 / DSM 46492 / JCM 5070 / NBRC 14893 / NCIMB 12804 / NRRL 8165 / MA-4680).